Here is a 339-residue protein sequence, read N- to C-terminus: D-erythrose-4-phosphate dehydrogenase (339 aa).

NAD(+)-binding positions include 12-13 (RI) and Arg-81. Substrate-binding positions include 154-156 (SCT), Arg-200, 213-214 (TK), and Arg-236. Cys-155 acts as the Nucleophile in catalysis. Asn-318 provides a ligand contact to NAD(+).

Belongs to the glyceraldehyde-3-phosphate dehydrogenase family. Epd subfamily. Homotetramer.

It localises to the cytoplasm. It catalyses the reaction D-erythrose 4-phosphate + NAD(+) + H2O = 4-phospho-D-erythronate + NADH + 2 H(+). It functions in the pathway cofactor biosynthesis; pyridoxine 5'-phosphate biosynthesis; pyridoxine 5'-phosphate from D-erythrose 4-phosphate: step 1/5. Functionally, catalyzes the NAD-dependent conversion of D-erythrose 4-phosphate to 4-phosphoerythronate. The protein is D-erythrose-4-phosphate dehydrogenase of Escherichia coli O45:K1 (strain S88 / ExPEC).